The following is a 298-amino-acid chain: tRNA dimethylallyltransferase (298 aa).

Residue 12-19 participates in ATP binding; that stretch reads GPTASGKT. 14–19 is a substrate binding site; that stretch reads TASGKT. The interval 37-40 is interaction with substrate tRNA; that stretch reads DSRQ.

It belongs to the IPP transferase family. In terms of assembly, monomer. Mg(2+) serves as cofactor.

It catalyses the reaction adenosine(37) in tRNA + dimethylallyl diphosphate = N(6)-dimethylallyladenosine(37) in tRNA + diphosphate. Catalyzes the transfer of a dimethylallyl group onto the adenine at position 37 in tRNAs that read codons beginning with uridine, leading to the formation of N6-(dimethylallyl)adenosine (i(6)A). This Synechococcus sp. (strain CC9902) protein is tRNA dimethylallyltransferase.